The primary structure comprises 680 residues: MRHIWALPSLTALSLFQASAASAVPRARQAINTSSPLAPFRTKRRFRTQAQLLSNSATKTTLVEEMVTVDTTSRLAALRSLMKERNLHVYVVPSEDSHASEYIADCDARRTFISGFSGSAGTAIVTLDKAALATDGRYFNQASKQLDSNWYLLKTGMQDVPTWQEWATQEAEGGKLIGVDPQLISSAIAEKLDEDIKNAGGGGLVGIKENLVDLVWGSEQPPRPSNSVFLLGQQYAGKDTAAKLADLRKELDKKKAAGFVLSMLDEIAWLFNLRGSDIAYNPVFFSYAIVTQASATLYIDEAKLTDECKTYLERNKVTIKPYGALFEDSEELARRAEADSKDAKPRKYLISSKGSWALKLALGGNKFVDEVRSPVGDAKAVKNDVELNGMRNCHIRDGAALTEFFAWLEDQLVNQKAQLDEVDAADKLEQIRSKHKDFVGLSFDTISSTGANAAVIHYKPEKGACKIIDPNAIYLCDSGAQYLDGTTDTTRTLHFGTPTAKEKKAYTLVLKGNIALDSVVFPKGTSGFAIDVMARQFLWKYGLDYRHGTGHGVGSFLNVHEGPIGIGTRKQYIDVALAAGNVLSIEPGYYEDEAFGIRIENLAIVKEVKTEHSFGDKPYLGFEHVTMVPYARNLIDETLLTPDEKDWLNRANKKILEKTLGYFENDPLTKAWLLRETQPF.

Positions 477, 488, 586, and 600 each coordinate Mn(2+).

It belongs to the peptidase M24B family. It depends on Mn(2+) as a cofactor.

The catalysed reaction is Release of any N-terminal amino acid, including proline, that is linked to proline, even from a dipeptide or tripeptide.. In terms of biological role, catalyzes the removal of a penultimate prolyl residue from the N-termini of peptides. This Podospora anserina (strain S / ATCC MYA-4624 / DSM 980 / FGSC 10383) (Pleurage anserina) protein is Probable Xaa-Pro aminopeptidase P (AMPP).